The primary structure comprises 439 residues: Ribosomal protein uS12 methylthiotransferase RimO (439 aa).

The region spanning 5–115 (PKIGFVSLGC…LIEAVHTHAP (111 aa)) is the MTTase N-terminal domain. The [4Fe-4S] cluster site is built by Cys-14, Cys-50, Cys-79, Cys-146, Cys-150, and Cys-153. The region spanning 132–369 (LTPRHYSYLK…MGLQAQISTD (238 aa)) is the Radical SAM core domain. The 68-residue stretch at 372-439 (QRFVGTEQQV…ESTEYDLIAD (68 aa)) folds into the TRAM domain.

This sequence belongs to the methylthiotransferase family. RimO subfamily. Requires [4Fe-4S] cluster as cofactor.

The protein resides in the cytoplasm. It carries out the reaction L-aspartate(89)-[ribosomal protein uS12]-hydrogen + (sulfur carrier)-SH + AH2 + 2 S-adenosyl-L-methionine = 3-methylsulfanyl-L-aspartate(89)-[ribosomal protein uS12]-hydrogen + (sulfur carrier)-H + 5'-deoxyadenosine + L-methionine + A + S-adenosyl-L-homocysteine + 2 H(+). Catalyzes the methylthiolation of an aspartic acid residue of ribosomal protein uS12. The sequence is that of Ribosomal protein uS12 methylthiotransferase RimO from Francisella tularensis subsp. novicida (strain U112).